We begin with the raw amino-acid sequence, 161 residues long: MRVAIYPGSFDPITEGHLDIIKRASKVFDEVIVSVLVNPDKKGLFSIEERVKLIEKVTEDIDNVKAESFEGLLVDYMKEKDAKVIIKGLRVVSDFEYELQMAHMNKKLDSSIETVFMMTNAKYSYLSSSSIKQVVMFGGCIEGLVPNKIIKDIINKIGKVR.

Ser-9 contacts substrate. ATP is bound by residues 9-10 (SF) and His-17. Positions 41, 73, and 87 each coordinate substrate. ATP-binding positions include 88–90 (GLR), Glu-98, and 123–129 (YSYLSSS).

Belongs to the bacterial CoaD family. As to quaternary structure, homohexamer. The cofactor is Mg(2+).

It is found in the cytoplasm. It catalyses the reaction (R)-4'-phosphopantetheine + ATP + H(+) = 3'-dephospho-CoA + diphosphate. It participates in cofactor biosynthesis; coenzyme A biosynthesis; CoA from (R)-pantothenate: step 4/5. Its function is as follows. Reversibly transfers an adenylyl group from ATP to 4'-phosphopantetheine, yielding dephospho-CoA (dPCoA) and pyrophosphate. This is Phosphopantetheine adenylyltransferase from Clostridium novyi (strain NT).